We begin with the raw amino-acid sequence, 304 residues long: Probable actin-related protein 2/3 complex subunit 2 (304 aa).

Belongs to the ARPC2 family. Component of the Arp2/3 complex.

Its subcellular location is the cytoplasm. It localises to the cytoskeleton. In terms of biological role, functions as actin-binding component of the Arp2/3 complex which is involved in regulation of actin polymerization and together with an activating nucleation-promoting factor (NPF) mediates the formation of branched actin networks. Seems to contact the mother actin filament. The chain is Probable actin-related protein 2/3 complex subunit 2 (Arc-p34) from Anopheles gambiae (African malaria mosquito).